Consider the following 226-residue polypeptide: Leucyl/phenylalanyl-tRNA--protein transferase (226 aa).

The protein belongs to the L/F-transferase family.

It localises to the cytoplasm. It catalyses the reaction N-terminal L-lysyl-[protein] + L-leucyl-tRNA(Leu) = N-terminal L-leucyl-L-lysyl-[protein] + tRNA(Leu) + H(+). The enzyme catalyses N-terminal L-arginyl-[protein] + L-leucyl-tRNA(Leu) = N-terminal L-leucyl-L-arginyl-[protein] + tRNA(Leu) + H(+). It carries out the reaction L-phenylalanyl-tRNA(Phe) + an N-terminal L-alpha-aminoacyl-[protein] = an N-terminal L-phenylalanyl-L-alpha-aminoacyl-[protein] + tRNA(Phe). Its function is as follows. Functions in the N-end rule pathway of protein degradation where it conjugates Leu, Phe and, less efficiently, Met from aminoacyl-tRNAs to the N-termini of proteins containing an N-terminal arginine or lysine. The protein is Leucyl/phenylalanyl-tRNA--protein transferase of Pseudomonas fluorescens (strain Pf0-1).